The chain runs to 779 residues: MASDTPESLMALCTDFCLRNLDGTLGYLLDKETLRLHPDIFLPSEICDQLVNEYVELVSAACTFEPHETFFSLFSDPRSTRLTRIHLREDLVQDQDLEAIRKQDLVELYLTNCEKLSAKSLQTLRSFRHSLVSLSLSGCANIFYEEDNPGGCEDECLVNPTCQVLVKDFTFEGFSRLRFLNLGRMIDGIPVESLLRPLNSLAALDLSGIQTSDATFLTQWKDSLMSLVLYNMDLSDDHIRVIVQLHKLRSKILTCGPHLISSHLDISRDRLSSYYKFKLTRKVLSLLVQKLGNLMSLDISGHMILENCSISKTDEEAGQTSTEPSKSSIMPFRALKRPLQFLGLFETSLCRLTHIPAYKVSGDKNEEQVLNAIEAYTEHRPEITSRAINLLFDIARIERCNQLLRALKLVITALKCHKYDKNIQVTGSAALFYLTNSEYRSEQSVKLRRQVIQVVLNGMESYQEVTVQRNCCLTLCNFSIPEELEFQYRRVNELLLGILSPTRQDESIQRIAVHLCNALVCQVDNDHKEAVGKMGFVVTMLKLIQKKLLDKTCDQVMEFSWSALWNITDETPDNCEMFLNFNGMKLFLDCLKEFPEKQELHRNMLGLLGNVAEVKELRPQLMTSQFISVFSNLLESKADGIEVSYNACGVLSHIMFDGPEAWGVCEPQRAEVEDRMWAAIQSWDINSRRNINYRSFEPILRLLPQGISPVSQHWATWALYNLVSVYPDKYCPLLIKEGGMPLLRDLIKMATARQETKEMARKVIEHCSNFREENMDTSR.

N-acetylalanine is present on alanine 2. 3 LRR repeats span residues 226 to 245, 246 to 281, and 291 to 315; these read SLVLYNMDLSDDHIRVIVQL, HKLRSKILTCGPHLISSHLDISRDRLSSYYKFKLTR, and LGNLMSLDISGHMILENCSISKTDE. ARM repeat units follow at residues 440 to 480, 524 to 569, 571 to 613, 615 to 656, and 727 to 769; these read RSEQ…NFSI, DNDH…NITD, TPDN…NVAE, KELR…HIMF, and PDKY…HCSN.

This sequence belongs to the zyg-11 family. In terms of assembly, interacts with the ELOC-ELOB/Elongin BC complex. Part of an E3 ubiquitin ligase complex including ZER1, CUL2 and Elongin BC.

Serves as substrate adapter subunit in the E3 ubiquitin ligase complex ZYG11B-CUL2-Elongin BC. Acts redudantly with ZYG11B to target substrates bearing N-terminal glycine degrons for proteasomal degradation. Involved in the clearance of proteolytic fragments generated by caspase cleavage during apoptosis since N-terminal glycine degrons are strongly enriched at caspase cleavage sites. Also important in the quality control of protein N-myristoylation in which N-terminal glycine degrons are conditionally exposed after a failure of N-myristoylation. The polypeptide is Protein zer-1 homolog (Mus musculus (Mouse)).